The primary structure comprises 668 residues: UvrABC system protein B (668 aa).

Residues Arg25–Gly414 form the Helicase ATP-binding domain. ATP is bound at residue Gly38–Thr45. The Beta-hairpin signature appears at Tyr91–Ile114. The Helicase C-terminal domain occupies Asp431–Leu594. The UVR domain maps to Lys627–Gln662.

Belongs to the UvrB family. Forms a heterotetramer with UvrA during the search for lesions. Interacts with UvrC in an incision complex.

It is found in the cytoplasm. Its function is as follows. The UvrABC repair system catalyzes the recognition and processing of DNA lesions. A damage recognition complex composed of 2 UvrA and 2 UvrB subunits scans DNA for abnormalities. Upon binding of the UvrA(2)B(2) complex to a putative damaged site, the DNA wraps around one UvrB monomer. DNA wrap is dependent on ATP binding by UvrB and probably causes local melting of the DNA helix, facilitating insertion of UvrB beta-hairpin between the DNA strands. Then UvrB probes one DNA strand for the presence of a lesion. If a lesion is found the UvrA subunits dissociate and the UvrB-DNA preincision complex is formed. This complex is subsequently bound by UvrC and the second UvrB is released. If no lesion is found, the DNA wraps around the other UvrB subunit that will check the other stand for damage. The chain is UvrABC system protein B from Treponema pallidum (strain Nichols).